A 371-amino-acid polypeptide reads, in one-letter code: MFFRVRFLLFFLLFRNLCCLLTSGCLLRVYGVGFSLGFFICMQIICGVCLAWLFFSCFICTNWYFVLFLWDFDLGFVIRSTHICFTSLLFFLLYVHIFKCIVLIILFDTHILVWAVGFIIYIFIVVIGFIGYVLPCTMMSYWGLTVFSNILATVPVIGTWLCYWIWGSEYINDFTLLKLHVLHVLLPFVLILVIFMHLFCLHYFMSSDGFCDRFAFYCERLCFCMWFYLRDMFLAFLILFYVVYFIFINWYFVFHEESWVIVDTLKTSDKILPEWFFLFLFGFLKAVPDKFTGLLLMVILLFSLFLFILNCILWFVYCRSSLLWFTYSLILFYSIFMSGFLALYVILAYPIWMELQFWVLLLFMLVVCRLD.

4 consecutive transmembrane segments (helical) span residues 32-52, 76-98, 113-133, and 179-199; these read VGFS…CLAW, FVIR…VHIF, VWAV…IGYV, and LHVL…MHLF. 2 residues coordinate heme b: His-82 and His-96. Heme b is bound by residues His-183 and His-197. A ubiquinone is bound at residue His-202. 4 consecutive transmembrane segments (helical) span residues 227–247, 296–316, 329–349, and 350–370; these read FYLR…YFIF, LMVI…LWFV, LILF…ILAY, and PIWM…VCRL.

The protein belongs to the cytochrome b family. As to quaternary structure, the main subunits of complex b-c1 are: cytochrome b, cytochrome c1 and the Rieske protein. The cofactor is heme b.

It localises to the mitochondrion inner membrane. Its function is as follows. Component of the ubiquinol-cytochrome c reductase complex (complex III or cytochrome b-c1 complex) that is part of the mitochondrial respiratory chain. The b-c1 complex mediates electron transfer from ubiquinol to cytochrome c. Contributes to the generation of a proton gradient across the mitochondrial membrane that is then used for ATP synthesis. The protein is Cytochrome b (MT-CYB) of Leishmania tarentolae (Sauroleishmania tarentolae).